The following is a 204-amino-acid chain: N-(5'-phosphoribosyl)anthranilate isomerase (204 aa).

It belongs to the TrpF family.

The catalysed reaction is N-(5-phospho-beta-D-ribosyl)anthranilate = 1-(2-carboxyphenylamino)-1-deoxy-D-ribulose 5-phosphate. It functions in the pathway amino-acid biosynthesis; L-tryptophan biosynthesis; L-tryptophan from chorismate: step 3/5. The sequence is that of N-(5'-phosphoribosyl)anthranilate isomerase from Bacillus cereus (strain Q1).